The sequence spans 440 residues: Enolase (440 aa).

Glutamine 163 provides a ligand contact to (2R)-2-phosphoglycerate. Glutamate 205 acts as the Proton donor in catalysis. 3 residues coordinate Mg(2+): aspartate 242, glutamate 288, and aspartate 315. (2R)-2-phosphoglycerate contacts are provided by lysine 340, arginine 369, serine 370, and lysine 391. Catalysis depends on lysine 340, which acts as the Proton acceptor.

This sequence belongs to the enolase family. Mg(2+) serves as cofactor.

It localises to the cytoplasm. Its subcellular location is the secreted. The protein resides in the cell surface. It carries out the reaction (2R)-2-phosphoglycerate = phosphoenolpyruvate + H2O. It functions in the pathway carbohydrate degradation; glycolysis; pyruvate from D-glyceraldehyde 3-phosphate: step 4/5. Its function is as follows. Catalyzes the reversible conversion of 2-phosphoglycerate (2-PG) into phosphoenolpyruvate (PEP). It is essential for the degradation of carbohydrates via glycolysis. The polypeptide is Enolase (Limosilactobacillus fermentum (strain NBRC 3956 / LMG 18251) (Lactobacillus fermentum)).